Here is a 560-residue protein sequence, read N- to C-terminus: Dihydroxy-acid dehydratase (560 aa).

A [2Fe-2S] cluster-binding site is contributed by Cys52. Asp84 contacts Mg(2+). Cys125 contributes to the [2Fe-2S] cluster binding site. The Mg(2+) site is built by Asp126 and Lys127. An N6-carboxylysine modification is found at Lys127. Cys197 is a [2Fe-2S] cluster binding site. Glu448 serves as a coordination point for Mg(2+). The active-site Proton acceptor is the Ser474.

Belongs to the IlvD/Edd family. As to quaternary structure, homodimer. The cofactor is [2Fe-2S] cluster. It depends on Mg(2+) as a cofactor.

It carries out the reaction (2R)-2,3-dihydroxy-3-methylbutanoate = 3-methyl-2-oxobutanoate + H2O. The enzyme catalyses (2R,3R)-2,3-dihydroxy-3-methylpentanoate = (S)-3-methyl-2-oxopentanoate + H2O. It functions in the pathway amino-acid biosynthesis; L-isoleucine biosynthesis; L-isoleucine from 2-oxobutanoate: step 3/4. The protein operates within amino-acid biosynthesis; L-valine biosynthesis; L-valine from pyruvate: step 3/4. Functions in the biosynthesis of branched-chain amino acids. Catalyzes the dehydration of (2R,3R)-2,3-dihydroxy-3-methylpentanoate (2,3-dihydroxy-3-methylvalerate) into 2-oxo-3-methylpentanoate (2-oxo-3-methylvalerate) and of (2R)-2,3-dihydroxy-3-methylbutanoate (2,3-dihydroxyisovalerate) into 2-oxo-3-methylbutanoate (2-oxoisovalerate), the penultimate precursor to L-isoleucine and L-valine, respectively. The polypeptide is Dihydroxy-acid dehydratase (Francisella tularensis subsp. novicida (strain U112)).